The following is a 486-amino-acid chain: BTB/POZ domain and ankyrin repeat-containing protein BOP (486 aa).

One can recognise a BTB domain in the interval 25 to 115 (SDVTFSVEGR…LYSGQVSIVP (91 aa)). A C2HC NPR-type zinc finger spans residues 121 to 135 (RPNCGERGCWHTHCS). Zn(2+) contacts are provided by C124, C129, H131, and C134. 4 ANK repeats span residues 257–286 (QKIRRMRRALDSSDVELVKLMVMGEGLNLD), 287–316 (EALALHYAVENCSREVAKALLELGAADVNY), 321–350 (AGKTPLHIAAEMVSPDMVAVLLDHHADPNV), and 354–388 (DNVTPLDILRTLTSDFLFKGAIPGLTHIEPNKLRL). Disordered regions lie at residues 403 to 442 (EEGNANNNPPSSTTTTLPMYHHPMNDDHNSSSSSGNNHNI) and 464 to 486 (QMSDDHGGRHGDPAMYHHSHHDY). 2 stretches are compositionally biased toward low complexity: residues 406-418 (NANNNPPSSTTTT) and 432-442 (SSSSSGNNHNI). A compositionally biased stretch (basic and acidic residues) spans 466-475 (SDDHGGRHGD).

It belongs to the plant 'ANKYRIN-BTB/POZ' family. 'NOOT-BOP-COCH-like' (NBCL) subfamily. In terms of assembly, homodimer. Expressed in xylem vessels and parenchyma cells of pedicel vascular tissue in the abscission zone (AZ). Accumulates in developing root nodules and present in roots, especially in the upper part.

The protein localises to the nucleus. It localises to the cytoplasm. Its subcellular location is the cell membrane. It functions in the pathway protein modification; protein ubiquitination. Its function is as follows. May act as a substrate-specific adapter of an E3 ubiquitin-protein ligase complex (CUL3-RBX1-BTB) which mediates the ubiquitination and subsequent proteasomal degradation of target proteins. Transcriptional co-regulator involved in promoting the fate and determination of leaf and flower meristems. Required for the abscission of senescent organs, probably by regulating the cell wall disorganization in abscission zones (AZs, e.g. pulvini at the base of leaves). Involved in the coordination of the symbiotic nodule developmental program; promotes the formation of root nodules by interacting directly with APP1 to modulate the expression of the nuclear transcription factor Y subunit (NF-YA1), a key nodulin. Necessary for the robust maintenance of nodule identity throughout the nodule developmental program. The protein is BTB/POZ domain and ankyrin repeat-containing protein BOP of Lupinus luteus (European yellow lupine).